We begin with the raw amino-acid sequence, 81 residues long: ATP synthase subunit c (81 aa).

Helical transmembrane passes span 5–25 and 57–77; these read IAAG…IGAG and VGLV…FVFA.

The protein belongs to the ATPase C chain family. F-type ATPases have 2 components, F(1) - the catalytic core - and F(0) - the membrane proton channel. F(1) has five subunits: alpha(3), beta(3), gamma(1), delta(1), epsilon(1). F(0) has three main subunits: a(1), b(2) and c(10-14). The alpha and beta chains form an alternating ring which encloses part of the gamma chain. F(1) is attached to F(0) by a central stalk formed by the gamma and epsilon chains, while a peripheral stalk is formed by the delta and b chains.

It localises to the cell membrane. In terms of biological role, f(1)F(0) ATP synthase produces ATP from ADP in the presence of a proton or sodium gradient. F-type ATPases consist of two structural domains, F(1) containing the extramembraneous catalytic core and F(0) containing the membrane proton channel, linked together by a central stalk and a peripheral stalk. During catalysis, ATP synthesis in the catalytic domain of F(1) is coupled via a rotary mechanism of the central stalk subunits to proton translocation. Functionally, key component of the F(0) channel; it plays a direct role in translocation across the membrane. A homomeric c-ring of between 10-14 subunits forms the central stalk rotor element with the F(1) delta and epsilon subunits. In Mycolicibacterium gilvum (strain PYR-GCK) (Mycobacterium gilvum (strain PYR-GCK)), this protein is ATP synthase subunit c.